Reading from the N-terminus, the 363-residue chain is UDP-N-acetylglucosamine--N-acetylmuramyl-(pentapeptide) pyrophosphoryl-undecaprenol N-acetylglucosamine transferase (363 aa).

Residues 10-12, asparagine 124, serine 195, isoleucine 248, and glutamine 293 each bind UDP-N-acetyl-alpha-D-glucosamine; that span reads TGG.

It belongs to the glycosyltransferase 28 family. MurG subfamily.

It is found in the cell membrane. It catalyses the reaction Mur2Ac(oyl-L-Ala-gamma-D-Glu-L-Lys-D-Ala-D-Ala)-di-trans,octa-cis-undecaprenyl diphosphate + UDP-N-acetyl-alpha-D-glucosamine = beta-D-GlcNAc-(1-&gt;4)-Mur2Ac(oyl-L-Ala-gamma-D-Glu-L-Lys-D-Ala-D-Ala)-di-trans,octa-cis-undecaprenyl diphosphate + UDP + H(+). It functions in the pathway cell wall biogenesis; peptidoglycan biosynthesis. Its function is as follows. Cell wall formation. Catalyzes the transfer of a GlcNAc subunit on undecaprenyl-pyrophosphoryl-MurNAc-pentapeptide (lipid intermediate I) to form undecaprenyl-pyrophosphoryl-MurNAc-(pentapeptide)GlcNAc (lipid intermediate II). The protein is UDP-N-acetylglucosamine--N-acetylmuramyl-(pentapeptide) pyrophosphoryl-undecaprenol N-acetylglucosamine transferase of Lacticaseibacillus casei (strain BL23) (Lactobacillus casei).